Reading from the N-terminus, the 394-residue chain is Probable purine permease 8 (394 aa).

Helical transmembrane passes span 45-65 (WLRI…STIL), 77-97 (TWMG…FRFF), 113-133 (FSSF…VSAN), 139-159 (VGLL…QLAF), 172-192 (FTPF…LLVV), 208-228 (VIGI…LSLV), 247-267 (LVAY…FASG), 289-309 (TLAS…GLIF), 315-335 (FSNS…VIVF), and 344-364 (IFSI…HYLD). Positions 373–394 (TSPVGDPHLLPAEEGHTNIHSV) are disordered. A compositionally biased stretch (basic and acidic residues) spans 383–394 (PAEEGHTNIHSV).

It belongs to the purine permeases (TC 2.A.7.14) family.

Its subcellular location is the membrane. This is Probable purine permease 8 (PUP8) from Arabidopsis thaliana (Mouse-ear cress).